The following is a 475-amino-acid chain: Ribulose bisphosphate carboxylase large chain (475 aa).

Positions 1–2 (MS) are excised as a propeptide. P3 is subject to N-acetylproline. K14 carries the N6,N6,N6-trimethyllysine modification. The Proton acceptor role is filled by K175. D-ribulose 1,5-bisphosphate is bound by residues K175 and K177. K201, D203, and E204 together coordinate Mg(2+). N6-carboxylysine is present on K201. A D-ribulose 1,5-bisphosphate-binding site is contributed by E204. H294 functions as the Proton acceptor in the catalytic mechanism. D-ribulose 1,5-bisphosphate-binding residues include R295, H327, K334, S379, G381, G403, and G404.

This sequence belongs to the RuBisCO large chain family. Type I subfamily. As to quaternary structure, heterohexadecamer of 8 large chains and 8 small chains. Heterohexadecamer; disulfide-linked. The disulfide link is formed within the large subunit homodimers. Requires Mg(2+) as cofactor. Post-translationally, the disulfide bond which can form in the large chain dimeric partners within the hexadecamer appears to be associated with oxidative stress and protein turnover.

It localises to the plastid. The protein localises to the chloroplast. It carries out the reaction 2 (2R)-3-phosphoglycerate + 2 H(+) = D-ribulose 1,5-bisphosphate + CO2 + H2O. The enzyme catalyses D-ribulose 1,5-bisphosphate + O2 = 2-phosphoglycolate + (2R)-3-phosphoglycerate + 2 H(+). Its function is as follows. RuBisCO catalyzes two reactions: the carboxylation of D-ribulose 1,5-bisphosphate, the primary event in carbon dioxide fixation, as well as the oxidative fragmentation of the pentose substrate in the photorespiration process. Both reactions occur simultaneously and in competition at the same active site. Binds to abscisic acid (ABA); only half of the possible binding sites are occupied in the crystal and there are indications this is a low affinity site. In Pisum sativum (Garden pea), this protein is Ribulose bisphosphate carboxylase large chain.